Reading from the N-terminus, the 338-residue chain is Auxin-responsive protein IAA9 (338 aa).

Residues 1–25 form a disordered region; that stretch reads MSPEEELQSNVSVASSSPTSNCISR. A compositionally biased stretch (low complexity) spans 9-21; sequence SNVSVASSSPTSN. Positions 68-72 match the EAR-like (transcriptional repression) motif; it reads LTLGL. The tract at residues 150–186 is disordered; it reads ATQSVTKKDVPQNIPKGQSSTTNNSSSPPAAKAQIVG. The span at 168 to 180 shows a compositional bias: low complexity; sequence SSTTNNSSSPPAA. The PB1 domain maps to 216–318; that stretch reads ALFVKVSMDG…VCKKLKIMKG (103 aa).

The protein belongs to the Aux/IAA family. As to quaternary structure, homodimers and heterodimers. Interacts with TPL. Post-translationally, phosphorylated by phytochrome A in vitro. As to expression, highly expressed in the whole plant.

It localises to the nucleus. Functionally, aux/IAA proteins are short-lived transcriptional factors that function as repressors of early auxin response genes at low auxin concentrations. Repression is thought to result from the interaction with auxin response factors (ARFs), proteins that bind to the auxin-responsive promoter element (AuxRE). Formation of heterodimers with ARF proteins may alter their ability to modulate early auxin response genes expression. This is Auxin-responsive protein IAA9 (IAA9) from Arabidopsis thaliana (Mouse-ear cress).